We begin with the raw amino-acid sequence, 256 residues long: Myb family transcription factor MPH1 (256 aa).

The 61-residue stretch at arginine 14–serine 74 folds into the HTH myb-type domain. Residues proline 45 to arginine 70 constitute a DNA-binding region (H-T-H motif).

In terms of tissue distribution, highly expressed in the pulvinus and stem nodes. Expressed in the plumule of germinating seeds, coleoptile, leaves, internodes, leave sheaths, spikes and roots.

Its subcellular location is the nucleus. In terms of biological role, probable transcription factor involved in the regulation of plant height by elongating internode cell length. Involved in the positive regulation of grain yield. May be involved in the regulation of genes related to cell elongation and cell wall synthesis, which are associated with plant height and yield phenotypes. Plays a role in tolerance to cadmium stress. This is Myb family transcription factor MPH1 from Oryza sativa subsp. japonica (Rice).